Here is a 112-residue protein sequence, read N- to C-terminus: Large ribosomal subunit protein mL53 (112 aa).

Belongs to the mitochondrion-specific ribosomal protein mL53 family. In terms of assembly, component of the mitochondrial ribosome large subunit (39S) which comprises a 16S rRNA and about 50 distinct proteins.

It localises to the mitochondrion. The protein is Large ribosomal subunit protein mL53 (MRPL53) of Pongo abelii (Sumatran orangutan).